The primary structure comprises 256 residues: Myeloblastin (256 aa).

The signal sequence occupies residues M1–A25. Residues A26–E27 constitute a propeptide that is removed on maturation. The region spanning I28–R248 is the Peptidase S1 domain. Cysteines 56 and 72 form a disulfide. Residues H71 and D118 each act as charge relay system in the active site. 2 N-linked (GlcNAc...) asparagine glycosylation sites follow: N129 and N174. Cystine bridges form between C152-C209, C182-C188, and C199-C224. S203 serves as the catalytic Charge relay system. A propeptide spanning residues R249–P256 is cleaved from the precursor.

It belongs to the peptidase S1 family. Elastase subfamily. May form dimers. Interacts with CD177; the interaction tethers PRTN3 to the cell surface; the interaction is direct. Interacts with SERPINB1. Interacts with ADGRG3. As to expression, expressed in polymorphonuclear leukocytes (at protein level). Expressed in neutrophils (at protein level). Expressed in differentiating neutrophils.

The protein resides in the cytoplasmic granule. It is found in the secreted. Its subcellular location is the cell membrane. The protein localises to the membrane raft. The catalysed reaction is Hydrolysis of proteins, including elastin, by preferential cleavage: -Ala-|-Xaa- &gt; -Val-|-Xaa-.. Inhibited by phenylmethanesulfonyl fluoride (PMSF) and diisopropyl fluorophosphate (DFP). Its function is as follows. Serine protease that degrades elastin, fibronectin, laminin, vitronectin, and collagen types I, III, and IV (in vitro). By cleaving and activating receptor F2RL1/PAR-2, enhances endothelial cell barrier function and thus vascular integrity during neutrophil transendothelial migration. Plays a role in neutrophil transendothelial migration, probably when associated with CD177. Triggers inflammatory processes in neutrophils by interacting with ADGRG3 upstream of F2RL1/PAR2 activation. This Homo sapiens (Human) protein is Myeloblastin (PRTN3).